The following is an 86-amino-acid chain: Large ribosomal subunit protein bL27 (86 aa).

Belongs to the bacterial ribosomal protein bL27 family.

This chain is Large ribosomal subunit protein bL27, found in Xanthomonas oryzae pv. oryzae (strain PXO99A).